The chain runs to 143 residues: Transcriptional regulator MraZ (143 aa).

2 SpoVT-AbrB domains span residues 5–47 (EYEH…TLEE) and 76–119 (AVEV…DRET).

This sequence belongs to the MraZ family. Forms oligomers.

The protein localises to the cytoplasm. It is found in the nucleoid. The polypeptide is Transcriptional regulator MraZ (Staphylococcus saprophyticus subsp. saprophyticus (strain ATCC 15305 / DSM 20229 / NCIMB 8711 / NCTC 7292 / S-41)).